Reading from the N-terminus, the 668-residue chain is Phosphatidylinositol 4-phosphate 5-kinase type-1 gamma (668 aa).

A disordered region spans residues 45 to 67; that stretch reads SMTAQPGPGHGKKLGHRGVDASG. One can recognise a PIPK domain in the interval 75–443; that stretch reads TSSTLKGAIQ…RFFKFMSNTV (369 aa). Residues Lys-265 and Lys-268 each carry the N6-acetyllysine modification. The residue at position 459 (Arg-459) is an Asymmetric dimethylarginine; alternate. Omega-N-methylarginine; alternate is present on Arg-459. Over residues 526 to 535 the composition is skewed to low complexity; it reads TTLSSTSLSI. Disordered regions lie at residues 526–578 and 593–642; these read TTLS…ITVQ and EDAG…YFPT. At Ser-555 the chain carries Phosphoserine. Phosphotyrosine; by EGFR is present on Tyr-639. The interval 641 to 668 is mediates interaction with TLN2; sequence PTDERSWVYSPLHYSAQAPPASDGESDT. Tyr-649 bears the Phosphotyrosine; by CSK mark. Position 650 is a phosphoserine; by CDK5, MAPK1 and CDK1 (Ser-650). Phosphoserine is present on residues Ser-662 and Ser-666. Thr-668 carries the post-translational modification Phosphothreonine.

Interacts with TLN1. Interacts with TLN2; interaction stimulates 1-phosphatidylinositol-4-phosphate 5-kinase activity. May compete with beta-integrins for the same binding site on TLN1 and TLN2. Interacts with ARF6; interaction stimulates 1-phosphatidylinositol-4-phosphate 5-kinase activity. Interacts with AP2B1. Interacts with AP2M1; phosphorylation of PIP5K1C by CSK disrupts the interaction; clathrin competes with PIP5K1C. Interacts with CDH1. Interacts with CSK. Interacts with PLCG1; interaction is abolished upon EGF stimulation. Interacts with LAPTM4B; promotes SNX5 association with LAPTM4B; kinase activity of PIP5K1C is required; interaction is regulated by phosphatidylinositol 4,5-bisphosphate generated by PIP5K1C. In terms of processing, phosphorylation on Ser-650 negatively regulates binding to TLN2 and is strongly stimulated in mitosis. Phosphorylation on Tyr-649 is necessary for targeting to focal adhesions. Phosphorylation on Ser-650 and Tyr-649 are mutually exclusive. Phosphorylated by SYK and CSK. Tyrosine phosphorylation is enhanced by PTK2 signaling. Phosphorylated at Tyr-639 upon EGF stimulation. Some studies suggest that phosphorylation on Tyr-649 enhances binding to tailins (TLN1 and TLN2). According to PubMed:15738269 phosphorylation at Tyr-649 does not directly enhance binding to tailins (TLN1 and TLN2) but may act indirectly by inhibiting phosphorylation at Ser-650. Acetylation at Lys-265 and Lys-268 seems to decrease lipid 1-phosphatidylinositol-4-phosphate 5-kinase activity. Deacetylation of these sites by SIRT1 positively regulates the exocytosis of TSH-containing granules from pituitary cells. Isoform 1 is strongly expressed in brain and also detected in heart and lung. In terms of tissue distribution, isoform 2 is strongly expressed in pancreas and liver and in lesser quantities in brain, heart, lung and kidney. As to expression, isoform 3 is detected in large amounts in heart and large intestine, is also present in lung, pancreas and thyroid, and to a lesser extent in brain, stomach and kidney.

The protein localises to the cell membrane. The protein resides in the endomembrane system. It localises to the cytoplasm. It is found in the cell junction. Its subcellular location is the focal adhesion. The protein localises to the adherens junction. The protein resides in the cell projection. It localises to the ruffle membrane. It is found in the phagocytic cup. Its subcellular location is the uropodium. The protein localises to the nucleus. It carries out the reaction a 1,2-diacyl-sn-glycero-3-phospho-(1D-myo-inositol 4-phosphate) + ATP = a 1,2-diacyl-sn-glycero-3-phospho-(1D-myo-inositol-4,5-bisphosphate) + ADP + H(+). The catalysed reaction is 1-octadecanoyl-2-(5Z,8Z,11Z,14Z)-eicosatetraenoyl-sn-glycero-3-phospho-1D-myo-inositol 4-phosphate + ATP = 1-octadecanoyl-2-(5Z,8Z,11Z,14Z)-eicosatetraenoyl-sn-glycero-3-phospho-1D-myo-inositol 4,5-bisphosphate + ADP + H(+). The enzyme catalyses 1-octadecanoyl-2-(9Z)-octadecenoyl-sn-glycero-3-phospho-1D-myo-inositol 4-phosphate + ATP = 1-octadecanoyl-2-(9Z)-octadecenoyl-sn-glycero-3-phospho-1D-myo-inositol 4,5-bisphosphate + ADP + H(+). It catalyses the reaction 1-octadecanoyl-2-(9Z)-octadecenoyl-sn-glycero-3-phospho-1D-myo-inositol + ATP = 1-octadecanoyl-2-(9Z)-octadecenoyl-sn-glycero-3-phospho-1D-myo-inositol 5-phosphate + ADP + H(+). It carries out the reaction 1-octadecanoyl-2-(9Z,12Z)-octadecadienoyl-sn-glycero-3-phospho-1D-myo-inositol + ATP = 1-octadecanoyl-2-(9Z,12Z)-octadecadienoyl-sn-glycero-3-phospho-1D-myo-inositol 5-phosphate + ADP + H(+). The catalysed reaction is 1-octadecanoyl-2-(5Z,8Z,11Z,14Z-eicosatetraenoyl)-sn-glycero-3-phospho-(1D-myo-inositol) + ATP = 1-octadecanoyl-2-(5Z,8Z,11Z,14Z)-eicosatetraenoyl-sn-glycero-3-phospho-1D-myo-inositol 5-phosphate + ADP + H(+). The enzyme catalyses 1,2-di-(9Z,12Z)-octadecadienoyl-sn-glycero-3-phospho-1D-myo-inositol + ATP = 1,2-di(9Z,12Z)-octadecadienoyl-sn-glycero-3-phospho-1D-myo-inositol 5-phosphate + ADP + H(+). Its function is as follows. Catalyzes the phosphorylation of phosphatidylinositol 4-phosphate (PtdIns(4)P/PI4P) to form phosphatidylinositol 4,5-bisphosphate (PtdIns(4,5)P2/PIP2), a lipid second messenger that regulates several cellular processes such as signal transduction, vesicle trafficking, actin cytoskeleton dynamics, cell adhesion, and cell motility. PtdIns(4,5)P2 can directly act as a second messenger or can be utilized as a precursor to generate other second messengers: inositol 1,4,5-trisphosphate (IP3), diacylglycerol (DAG) or phosphatidylinositol-3,4,5-trisphosphate (PtdIns(3,4,5)P3/PIP3). PIP5K1A-mediated phosphorylation of PtdIns(4)P is the predominant pathway for PtdIns(4,5)P2 synthesis. Together with PIP5K1A, is required for phagocytosis, both enzymes regulating different types of actin remodeling at sequential steps. Promotes particle attachment by generating the pool of PtdIns(4,5)P2 that induces controlled actin depolymerization to facilitate Fc-gamma-R clustering. Mediates RAC1-dependent reorganization of actin filaments. Required for synaptic vesicle transport. Controls the plasma membrane pool of PtdIns(4,5)P2 implicated in synaptic vesicle endocytosis and exocytosis. Plays a role in endocytosis mediated by clathrin and AP-2 (adaptor protein complex 2). Required for clathrin-coated pits assembly at the synapse. Participates in cell junction assembly. Modulates adherens junctions formation by facilitating CDH1/cadherin trafficking. Required for focal adhesion dynamics. Modulates the targeting of talins (TLN1 and TLN2) to the plasma membrane and their efficient assembly into focal adhesions. Regulates the interaction between talins (TLN1 and TLN2) and beta-integrins. Required for uropodium formation and retraction of the cell rear during directed migration. Has a role in growth factor-stimulated directional cell migration and adhesion. Required for talin assembly into nascent adhesions forming at the leading edge toward the direction of the growth factor. Negative regulator of T-cell activation and adhesion. Negatively regulates integrin alpha-L/beta-2 (LFA-1) polarization and adhesion induced by T-cell receptor. Together with PIP5K1A has a role during embryogenesis and together with PIP5K1B may have a role immediately after birth. In Homo sapiens (Human), this protein is Phosphatidylinositol 4-phosphate 5-kinase type-1 gamma.